The sequence spans 493 residues: Alpha-amylase-related protein (493 aa).

Residues 1 to 19 (MFKFALTLTLCLAGSLSLA) form the signal peptide. Residue Gln20 is modified to Pyrrolidone carboxylic acid. Cys47 and Cys103 form a disulfide bridge. 3 residues coordinate Ca(2+): Asn117, Gln168, and Asp177. Cysteines 156 and 170 form a disulfide. Arg205 is a chloride binding site. Residue Asp207 is the Nucleophile of the active site. Residue His211 participates in Ca(2+) binding. Glu244 functions as the Proton donor in the catalytic mechanism. Positions 307 and 342 each coordinate chloride. Disulfide bonds link Cys375-Cys381, Cys417-Cys440, and Cys447-Cys459.

This sequence belongs to the glycosyl hydrolase 13 family. As to quaternary structure, monomer. The cofactor is Ca(2+). It depends on chloride as a cofactor.

It localises to the secreted. It carries out the reaction Endohydrolysis of (1-&gt;4)-alpha-D-glucosidic linkages in polysaccharides containing three or more (1-&gt;4)-alpha-linked D-glucose units.. The polypeptide is Alpha-amylase-related protein (Amyrel) (Drosophila sechellia (Fruit fly)).